Reading from the N-terminus, the 485-residue chain is Glutamate--tRNA ligase 1 (485 aa).

The 'HIGH' region signature appears at 9–19; it reads PSPTGHLHIGG. A 'KMSKS' region motif is present at residues 250 to 254; sequence KMSKR. Residue K253 coordinates ATP.

It belongs to the class-I aminoacyl-tRNA synthetase family. Glutamate--tRNA ligase type 1 subfamily. Monomer.

The protein localises to the cytoplasm. The enzyme catalyses tRNA(Glu) + L-glutamate + ATP = L-glutamyl-tRNA(Glu) + AMP + diphosphate. Functionally, catalyzes the attachment of glutamate to tRNA(Glu) in a two-step reaction: glutamate is first activated by ATP to form Glu-AMP and then transferred to the acceptor end of tRNA(Glu). This chain is Glutamate--tRNA ligase 1, found in Caldicellulosiruptor saccharolyticus (strain ATCC 43494 / DSM 8903 / Tp8T 6331).